A 251-amino-acid chain; its full sequence is 1-(5-phosphoribosyl)-5-[(5-phosphoribosylamino)methylideneamino] imidazole-4-carboxamide isomerase (251 aa).

Residue Asp8 is the Proton acceptor of the active site. Residue Asp131 is the Proton donor of the active site.

Belongs to the HisA/HisF family.

The protein localises to the cytoplasm. It carries out the reaction 1-(5-phospho-beta-D-ribosyl)-5-[(5-phospho-beta-D-ribosylamino)methylideneamino]imidazole-4-carboxamide = 5-[(5-phospho-1-deoxy-D-ribulos-1-ylimino)methylamino]-1-(5-phospho-beta-D-ribosyl)imidazole-4-carboxamide. It functions in the pathway amino-acid biosynthesis; L-histidine biosynthesis; L-histidine from 5-phospho-alpha-D-ribose 1-diphosphate: step 4/9. This chain is 1-(5-phosphoribosyl)-5-[(5-phosphoribosylamino)methylideneamino] imidazole-4-carboxamide isomerase, found in Burkholderia ambifaria (strain MC40-6).